Consider the following 556-residue polypeptide: MSEETLTTEVETRTNFITHIIDEDLASGKHNNVYTRFPPEPNGYLHIGHAKSICLNFGIAQEYHGKCNLRFDDTNPVKEDIEYVASIKQDVEWLGFKWQGEPRYASDYFDQLHGYAIELIEKGLAYVDELSPEEMREYRGTLTEAGKNSPYRDRSIAENLALFEKMKNGEFKEGTACLRAKIDMASPFIVMRDPVLYRVKFAHHHQTGDKWCIYPMYDFTHCISDAIERITHSLCTLEFQDNRRLYDWVLENISIERPLPHQYEFSRLNLEGTLTSKRKLLQLVTDGIVDGWNDPRMPTISGLRRRGYTPASLREFCRRIGVTKQDNVVEYAALEACIREDLNENAPRAMAVINPVRVVIENVAEPEILKAPNHPNRPELGERDLPFTREIYIDEADFREEANKQYKRLVLGKEVRLRNAYVIKAERVEKDASGKITTIFCSYDPETLGKNPADGRKVKGVIHWVSATQNKVAEFRIYNRLFNVANPGDEEDINAVINPSSLIVKHGFVEVNLANAQKEQGYQFEREGYYCLDSKEGSADNLIFNLTVSLKEGFTA.

The 'HIGH' region motif lies at 39-49; it reads PEPNGYLHIGH. ATP contacts are provided by residues 40–42 and 46–52; these read EPN and HIGHAKS. The L-glutamine site is built by Asp-72 and Tyr-217. ATP is bound by residues Thr-236 and 267-268; that span reads RL. The short motif at 274-278 is the 'KMSKS' region element; it reads LTSKR.

The protein belongs to the class-I aminoacyl-tRNA synthetase family. In terms of assembly, monomer.

It localises to the cytoplasm. The catalysed reaction is tRNA(Gln) + L-glutamine + ATP = L-glutaminyl-tRNA(Gln) + AMP + diphosphate. The polypeptide is Glutamine--tRNA ligase (Haemophilus ducreyi (strain 35000HP / ATCC 700724)).